The following is a 201-amino-acid chain: Superoxide dismutase [Mn/Fe] (201 aa).

The Fe(3+) site is built by His-27, His-81, Asp-162, and His-166. Residues His-27, His-81, Asp-162, and His-166 each coordinate Mn(2+).

This sequence belongs to the iron/manganese superoxide dismutase family. As to quaternary structure, homodimer. The cofactor is Mn(2+). It depends on Fe(3+) as a cofactor.

It catalyses the reaction 2 superoxide + 2 H(+) = H2O2 + O2. Its function is as follows. Destroys superoxide anion radicals which are normally produced within the cells and which are toxic to biological systems. Catalyzes the dismutation of superoxide anion radicals into O2 and H2O2 by successive reduction and oxidation of the transition metal ion at the active site. The chain is Superoxide dismutase [Mn/Fe] (sodA) from Staphylococcus carnosus.